A 474-amino-acid chain; its full sequence is MAAAVSTVGAINRAPLSLNGSGSGAVSAPASTFLGKKVVTVSRFAQSNKKSNGSFKVLAVKEDKQTDGDRWRGLAYDTSDDQQDITRGKGMVDSVFQAPMGTGTHHAVLSSYEYVSQGLRQYNLDNMMDGFYIAPAFMDKLVVHITKNFLTLPNIKVPLILGIWGGKGQGKSFQCELVMAKMGINPIMMSAGELESGNAGEPAKLIRQRYREAADLIKKGKMCCLFINDLDAGAGRMGGTTQYTVNNQMVNATLMNIADNPTNVQLPGMYNKEENARVPIICTGNDFSTLYAPLIRDGRMEKFYWAPTREDRIGVCKGIFRTDKIKDEDIVTLVDQFPGQSIDFFGALRARVYDDEVRKFVESLGVEKIGKRLVNSREGPPVFEQPEMTYEKLMEYGNMLVMEQENVKRVQLAETYLSQAALGDANADAIGRGTFYGKGAQQVNLPVPEGCTDPVAENFDPTARSDDGTCVYNF.

Residues 1 to 58 (MAAAVSTVGAINRAPLSLNGSGSGAVSAPASTFLGKKVVTVSRFAQSNKKSNGSFKVL) constitute a chloroplast transit peptide. Thr-78 carries the phosphothreonine; by CK2 modification. 165–172 (GGKGQGKS) serves as a coordination point for ATP. At Thr-283 the chain carries Phosphothreonine.

This sequence belongs to the RuBisCO activase family. In terms of processing, phosphorylated at Thr-78 by CK2.

The protein resides in the plastid. It localises to the chloroplast stroma. Its subcellular location is the chloroplast. The protein localises to the plastoglobule. Functionally, activation of RuBisCO (ribulose-1,5-bisphosphate carboxylase/oxygenase; EC 4.1.1.39) involves the ATP-dependent carboxylation of the epsilon-amino group of lysine leading to a carbamate structure. The protein is Ribulose bisphosphate carboxylase/oxygenase activase, chloroplastic (RCA) of Arabidopsis thaliana (Mouse-ear cress).